We begin with the raw amino-acid sequence, 614 residues long: 1-deoxy-D-xylulose-5-phosphate synthase (614 aa).

Residues histidine 74 and 115–117 (GHS) each bind thiamine diphosphate. Mg(2+) is bound at residue aspartate 146. Thiamine diphosphate-binding positions include 147–148 (GA), asparagine 175, tyrosine 282, and glutamate 363. A Mg(2+)-binding site is contributed by asparagine 175.

It belongs to the transketolase family. DXPS subfamily. Homodimer. It depends on Mg(2+) as a cofactor. Thiamine diphosphate serves as cofactor.

It catalyses the reaction D-glyceraldehyde 3-phosphate + pyruvate + H(+) = 1-deoxy-D-xylulose 5-phosphate + CO2. It participates in metabolic intermediate biosynthesis; 1-deoxy-D-xylulose 5-phosphate biosynthesis; 1-deoxy-D-xylulose 5-phosphate from D-glyceraldehyde 3-phosphate and pyruvate: step 1/1. Functionally, catalyzes the acyloin condensation reaction between C atoms 2 and 3 of pyruvate and glyceraldehyde 3-phosphate to yield 1-deoxy-D-xylulose-5-phosphate (DXP). This Methylobacillus flagellatus (strain ATCC 51484 / DSM 6875 / VKM B-1610 / KT) protein is 1-deoxy-D-xylulose-5-phosphate synthase.